The following is a 202-amino-acid chain: Na(+)-translocating NADH-quinone reductase subunit E (202 aa).

The next 6 membrane-spanning stretches (helical) occupy residues 11–31 (SVFV…FLAI), 35–55 (IDAA…TVPV), 81–101 (FLGL…MEMV), 114–134 (GVFL…LLMV), 144–164 (VVFG…LAGI), and 182–202 (ITFI…GIAL).

This sequence belongs to the NqrDE/RnfAE family. In terms of assembly, composed of six subunits; NqrA, NqrB, NqrC, NqrD, NqrE and NqrF.

Its subcellular location is the cell inner membrane. The enzyme catalyses a ubiquinone + n Na(+)(in) + NADH + H(+) = a ubiquinol + n Na(+)(out) + NAD(+). Its function is as follows. NQR complex catalyzes the reduction of ubiquinone-1 to ubiquinol by two successive reactions, coupled with the transport of Na(+) ions from the cytoplasm to the periplasm. NqrA to NqrE are probably involved in the second step, the conversion of ubisemiquinone to ubiquinol. The sequence is that of Na(+)-translocating NADH-quinone reductase subunit E from Saccharophagus degradans (strain 2-40 / ATCC 43961 / DSM 17024).